The sequence spans 188 residues: Peptidyl-tRNA hydrolase (188 aa).

TRNA is bound at residue Tyr14. His19 serves as the catalytic Proton acceptor. Tyr64, Asn66, and Asn113 together coordinate tRNA.

It belongs to the PTH family. As to quaternary structure, monomer.

Its subcellular location is the cytoplasm. It carries out the reaction an N-acyl-L-alpha-aminoacyl-tRNA + H2O = an N-acyl-L-amino acid + a tRNA + H(+). Its function is as follows. Hydrolyzes ribosome-free peptidyl-tRNAs (with 1 or more amino acids incorporated), which drop off the ribosome during protein synthesis, or as a result of ribosome stalling. Catalyzes the release of premature peptidyl moieties from peptidyl-tRNA molecules trapped in stalled 50S ribosomal subunits, and thus maintains levels of free tRNAs and 50S ribosomes. This Chloroflexus aggregans (strain MD-66 / DSM 9485) protein is Peptidyl-tRNA hydrolase.